The sequence spans 393 residues: Dual specificity mitogen-activated protein kinase kinase 1 (393 aa).

The segment at 1-27 (MPKKKPTPIQLNPAPDGSAVNGTSSAE) is disordered. A Protein kinase domain is found at 68–361 (FEKISELGAG…LKQLMVHAFI (294 aa)). ATP-binding positions include 74 to 82 (LGAGNGGVV) and K97. The active-site Proton acceptor is D190. A phosphoserine; by RAF mark is found at S218 and S222. Residues 270-307 (ELELMFGCQVEGDAAETPPRPRTPGRPLSSYGMDSRPP) form an RAF1-binding region. Position 286 is a phosphothreonine (T286). T292 is subject to Phosphothreonine; by MAPK1. Residue S298 is modified to Phosphoserine; by PAK.

This sequence belongs to the protein kinase superfamily. STE Ser/Thr protein kinase family. MAP kinase kinase subfamily. In terms of assembly, found in a complex with at least BRAF, HRAS, MAP2K1, MAPK3/ERK1 and RGS14. Forms a heterodimer with MAP2K2/MEK2. Forms heterodimers with KSR2 which further dimerize to form tetramers. Interacts with KSR1 or KSR2 and BRAF; the interaction with KSR1 or KSR2 mediates KSR1-BRAF or KSR2-BRAF dimerization. Interacts with ARBB2, LAMTOR3, MAPK1/ERK2 and RAF1. Interacts with MAPK1/ERK2. Interacts with MORG1. Interacts with PPARG. Interacts with SGK1. Interacts with BIRC6/bruce. Interacts with KAT7; the interaction promotes KAT7 phosphorylation. Interacts with RAF1 and NEK10; the interaction is required for ERK1/2-signaling pathway activation in response to UV irradiation. Interacts with TRAF3IP3. Interacts with MOS. In terms of processing, phosphorylation at Ser-218 and Ser-222 by MAP kinase kinase kinases (RAF or MEKK1) positively regulates the kinase activity. Also phosphorylated at Thr-292 by MAPK1/ERK2 and at Ser-298 by PAK. MAPK1/ERK2 phosphorylation of Thr-292 occurs in response to cellular adhesion and leads to inhibition of Ser-298 phosphorylation by PAK. Autophosphorylated at Ser-218 and Ser-222, autophosphosphorylation is promoted by NEK10 following UV irradiation.

The protein localises to the cytoplasm. It is found in the cytoskeleton. It localises to the microtubule organizing center. Its subcellular location is the centrosome. The protein resides in the spindle pole body. The protein localises to the nucleus. It is found in the membrane. The enzyme catalyses L-seryl-[protein] + ATP = O-phospho-L-seryl-[protein] + ADP + H(+). It carries out the reaction L-threonyl-[protein] + ATP = O-phospho-L-threonyl-[protein] + ADP + H(+). It catalyses the reaction L-tyrosyl-[protein] + ATP = O-phospho-L-tyrosyl-[protein] + ADP + H(+). Ras proteins such as HRAS mediate the activation of RAF proteins such as RAF1 or BRAF which in turn activate extracellular signal-regulated kinases (ERK) through MAPK (mitogen-activated protein kinases) and ERK kinases MAP2K1/MEK1 and MAP2K2/MEK2. Activation occurs through phosphorylation of Ser-218 and Ser-222. MAP2K1/MEK1 binds KSR1 or KSR2 releasing the inhibitory intramolecular interaction between KSR1 or KSR2 protein kinase and N-terminal domains. This allows KSR1 or KSR2 dimerization with BRAF leading to BRAF activation and phosphorylation of MAP2K1. MAP2K1/MEK1 is also the target of negative feed-back regulation by its substrate kinases, such as MAPK1/ERK2. These phosphorylate MAP2K1/MEK1 on Thr-292, thereby facilitating dephosphorylation of the activating residues Ser-218 and Ser-222. Inhibited by serine/threonine phosphatase 2A. Functionally, dual specificity protein kinase which acts as an essential component of the MAP kinase signal transduction pathway. Binding of extracellular ligands such as growth factors, cytokines and hormones to their cell-surface receptors activates RAS and this initiates RAF1 activation. RAF1 then further activates the dual-specificity protein kinases MAP2K1/MEK1 and MAP2K2/MEK2. Both MAP2K1/MEK1 and MAP2K2/MEK2 function specifically in the MAPK/ERK cascade, and catalyze the concomitant phosphorylation of a threonine and a tyrosine residue in a Thr-Glu-Tyr sequence located in the extracellular signal-regulated kinases MAPK3/ERK1 and MAPK1/ERK2, leading to their activation and further transduction of the signal within the MAPK/ERK cascade. Activates BRAF in a KSR1 or KSR2-dependent manner; by binding to KSR1 or KSR2 releases the inhibitory intramolecular interaction between KSR1 or KSR2 protein kinase and N-terminal domains which promotes KSR1 or KSR2-BRAF dimerization and BRAF activation. Depending on the cellular context, this pathway mediates diverse biological functions such as cell growth, adhesion, survival and differentiation, predominantly through the regulation of transcription, metabolism and cytoskeletal rearrangements. One target of the MAPK/ERK cascade is peroxisome proliferator-activated receptor gamma (PPARG), a nuclear receptor that promotes differentiation and apoptosis. MAP2K1/MEK1 has been shown to export PPARG from the nucleus. The MAPK/ERK cascade is also involved in the regulation of endosomal dynamics, including lysosome processing and endosome cycling through the perinuclear recycling compartment (PNRC), as well as in the fragmentation of the Golgi apparatus during mitosis. This Oryctolagus cuniculus (Rabbit) protein is Dual specificity mitogen-activated protein kinase kinase 1 (MAP2K1).